A 655-amino-acid polypeptide reads, in one-letter code: Hemagglutinin-esterase-fusion glycoprotein (655 aa).

A signal peptide spans 1–14 (MFFSLLLVLGLTEA). The segment at 15–40 (EKIKICLQKQVNSSFSLHNGFGGNLY) is fusion domain-1. At 15-630 (EKIKICLQKQ…QSDPFYWGSS (616 aa)) the chain is on the extracellular side. 7 disulfide bridges follow: cysteine 20–cysteine 583, cysteine 120–cysteine 165, cysteine 140–cysteine 188, cysteine 210–cysteine 252, cysteine 229–cysteine 316, cysteine 237–cysteine 289, and cysteine 346–cysteine 352. Asparagine 26 and asparagine 61 each carry an N-linked (GlcNAc...) asparagine; by host glycan. Esterase domain-1 regions lie at residues 41–151 (ATEE…IKLN) and 41–158 (ATEE…NIYE). The active-site Nucleophile is serine 71. N-linked (GlcNAc...) asparagine; by host glycans are attached at residues asparagine 144 and asparagine 189. 2 N-acetyl-9-O-acetylneuraminic acid binding regions span residues 151–310 (NFQK…FLLM) and 158–310 (ELAS…FLLM). 2 esterase domain-2 regions span residues 310-364 (MPER…YIGE) and 311-365 (PERS…IGEA). Fusion domain-2 regions lie at residues 365–650 (ADDH…SGIA) and 366–651 (DDHH…GIAI). Residues aspartate 366 and histidine 369 each act as charge relay system in the active site. N-linked (GlcNAc...) asparagine; by host glycans are attached at residues asparagine 395, asparagine 552, and asparagine 603. A helical transmembrane segment spans residues 631–651 (LGLAITATISLAALVISGIAI). The Cytoplasmic portion of the chain corresponds to 652–655 (CRTK).

Belongs to the influenza viruses hemagglutinin family. Homotrimer of disulfide-linked HEF1-HEF2. In terms of processing, in natural infection, inactive HEF is matured into HEF1 and HEF2 outside the cell by one or more trypsin-like, arginine-specific endoprotease.

Its subcellular location is the virion membrane. It is found in the host cell membrane. It carries out the reaction N-acetyl-9-O-acetylneuraminate + H2O = N-acetylneuraminate + acetate + H(+). It catalyses the reaction N-acetyl-4-O-acetylneuraminate + H2O = N-acetylneuraminate + acetate + H(+). Functionally, binds to the N-acetyl-9-O-acetylneuraminic acid residues on the cell surface, bringing about the attachment of the virus particle to the cell. Plays a major role in the determination of host range restriction and virulence. Class I viral fusion protein. Responsible for penetration of the virus into the cell cytoplasm by mediating the fusion of the membrane of the endocytosed virus particle with the endosomal membrane. Low pH in endosomes induce an irreversible conformational change in HEF2, releasing the fusion hydrophobic peptide. Several trimers are required to form a competent fusion pore. Displays a receptor-destroying activity which is a neuraminidate-O-acetyl esterase. This activity cleaves off any receptor on the cell surface, which would otherwise prevent virions release. These cleavages prevent self-aggregation and ensure the efficient spread of the progeny virus from cell to cell. This is Hemagglutinin-esterase-fusion glycoprotein from Homo sapiens (Human).